A 74-amino-acid chain; its full sequence is Small ribosomal subunit protein bS18 (74 aa).

Belongs to the bacterial ribosomal protein bS18 family. In terms of assembly, part of the 30S ribosomal subunit. Forms a tight heterodimer with protein bS6.

In terms of biological role, binds as a heterodimer with protein bS6 to the central domain of the 16S rRNA, where it helps stabilize the platform of the 30S subunit. The sequence is that of Small ribosomal subunit protein bS18 from Chlorobaculum tepidum (strain ATCC 49652 / DSM 12025 / NBRC 103806 / TLS) (Chlorobium tepidum).